Here is a 290-residue protein sequence, read N- to C-terminus: Protein SET (290 aa).

The segment at 1-45 is disordered; sequence MAPKRQSPLPPQKKKPRPPPALGPEETSASAGLPKKGEKEQQEAI. Residue A2 is modified to N,N,N-trimethylalanine. S7 carries the phosphoserine modification. P11 is subject to N6-acetyllysine. Residues K15, P24, and S28 each carry the phosphoserine modification. The interval 31–78 is dimerization; the sequence is AGLPKKGEKEQQEAIEHIDEVQNEIDRLNEQASEEILKVEQKYNKLRQ. Positions 35 to 45 are enriched in basic and acidic residues; the sequence is KKGEKEQQEAI. S63 is subject to Phosphoserine. At K68 the chain carries N6-acetyllysine. The interval 79 to 225 is earmuff domain; that stretch reads PFFQKRSELI…ELGEVIKDDI (147 aa). Y146 carries the post-translational modification Phosphotyrosine. K150 is modified (N6-acetyllysine). A Glycyl lysine isopeptide (Lys-Gly) (interchain with G-Cter in ubiquitin) cross-link involves residue K154. Disordered stretches follow at residues 158-207 and 236-290; these read LNES…TWFT and PDMD…GEDD. Residues 169-181 are compositionally biased toward basic and acidic residues; sequence TEIKWKSGKDLTK. K172 carries the N6-acetyllysine modification. Residues 237–290 show a composition bias toward acidic residues; sequence DMDDEEGEGEEDDDDDEEEEGLEDIDEEGDEDEGEEDEDDDEGEEGEEDEGEDD.

The protein belongs to the nucleosome assembly protein (NAP) family. Headphone-shaped homodimer. Isoforms 1 and 2 interact directly with each other and with ANP32A within the tripartite INHAT (inhibitor of acetyltransferases) complex. Isoform 1 and isoform 2 interact also with histones. Isoform 2 is a component of the SET complex, composed of at least ANP32A, APEX1, HMGB2, NME1, SET and TREX1, but not NME2 or TREX2. Within this complex, directly interacts with ANP32A, NME1, HMGB2 and TREX1; the interaction with ANP32A is enhanced after cleavage. Interacts with APBB1, CHTOP, SETBP1, SGO1. In terms of assembly, (Microbial infection) Interacts with herpes simplex virus 1 VP22. In terms of processing, isoform 2 is phosphorylated on Ser-15 and Ser-24. Isoform 2 is acetylated on Lys-11. Post-translationally, some glutamate residues are glycylated by TTLL8. This modification occurs exclusively on glutamate residues and results in a glycine chain on the gamma-carboxyl group. In terms of processing, N-terminus of isoform 1 is methylated by METTL11A/NTM1. Mainly trimethylated. Cleaved after Lys-176 by GZMA. The cleavage inhibits its nucleosome assembly activity and disrupts the inhibition on NME1. As to expression, widely expressed. Low levels in quiescent cells during serum starvation, contact inhibition or differentiation. Highly expressed in Wilms' tumor.

Its subcellular location is the cytoplasm. It is found in the cytosol. It localises to the endoplasmic reticulum. The protein resides in the nucleus. The protein localises to the nucleoplasm. In terms of biological role, multitasking protein, involved in apoptosis, transcription, nucleosome assembly and histone chaperoning. Isoform 2 anti-apoptotic activity is mediated by inhibition of the GZMA-activated DNase, NME1. In the course of cytotoxic T-lymphocyte (CTL)-induced apoptosis, GZMA cleaves SET, disrupting its binding to NME1 and releasing NME1 inhibition. Isoform 1 and isoform 2 are potent inhibitors of protein phosphatase 2A. Isoform 1 and isoform 2 inhibit EP300/CREBBP and PCAF-mediated acetylation of histones (HAT) and nucleosomes, most probably by masking the accessibility of lysines of histones to the acetylases. The predominant target for inhibition is histone H4. HAT inhibition leads to silencing of HAT-dependent transcription and prevents active demethylation of DNA. Both isoforms stimulate DNA replication of the adenovirus genome complexed with viral core proteins; however, isoform 2 specific activity is higher. This Homo sapiens (Human) protein is Protein SET (SET).